Here is an 867-residue protein sequence, read N- to C-terminus: Rifampicin phosphotransferase (867 aa).

The ATP-binding stretch occupies residues 1 to 314 (MKPYVLKFQE…FYIVQSRPIT (314 aa)). ATP-binding residues include Lys22, Arg117, Gly132, Thr136, Gln183, Glu297, Gln309, and Arg311. Residues 327-754 (NRVYISVAHQ…TSDGEMINGE (428 aa)) are rifampicin-binding. Gln336 and Tyr351 together coordinate rifampicin. A swivel phosphohistidine region spans residues 767-865 (GLPVSSGTVE…INGTEGYIEI (99 aa)). The active-site Tele-phosphohistidine intermediate is His825.

The protein belongs to the rifampicin phosphotransferase family.

It catalyses the reaction rifampicin + ATP + H2O = 21-phosphorifampicin + AMP + phosphate + 2 H(+). In terms of biological role, catalyzes the phosphorylation of rifampicin, also known as rifampin (RIF), leading to its inactivation. Confers high level resistance to a variety of clinically used rifamycin antibiotics. Does not show phosphoenolpyruvate (PEP) synthase activity. The protein is Rifampicin phosphotransferase of Listeria monocytogenes serotype 4b (strain F2365).